We begin with the raw amino-acid sequence, 308 residues long: UDP-N-acetylenolpyruvoylglucosamine reductase (308 aa).

Residues valine 32–glycine 196 form the FAD-binding PCMH-type domain. Arginine 176 is an active-site residue. Residue serine 225 is the Proton donor of the active site. The active site involves glutamate 296.

The protein belongs to the MurB family. It depends on FAD as a cofactor.

Its subcellular location is the cytoplasm. It carries out the reaction UDP-N-acetyl-alpha-D-muramate + NADP(+) = UDP-N-acetyl-3-O-(1-carboxyvinyl)-alpha-D-glucosamine + NADPH + H(+). It participates in cell wall biogenesis; peptidoglycan biosynthesis. Its function is as follows. Cell wall formation. The sequence is that of UDP-N-acetylenolpyruvoylglucosamine reductase from Legionella pneumophila subsp. pneumophila (strain Philadelphia 1 / ATCC 33152 / DSM 7513).